The chain runs to 162 residues: Cyanate hydratase (162 aa).

Catalysis depends on residues Arg-103, Glu-106, and Ser-129.

The protein belongs to the cyanase family.

It carries out the reaction cyanate + hydrogencarbonate + 3 H(+) = NH4(+) + 2 CO2. In terms of biological role, catalyzes the reaction of cyanate with bicarbonate to produce ammonia and carbon dioxide. In Pyrenophora tritici-repentis (strain Pt-1C-BFP) (Wheat tan spot fungus), this protein is Cyanate hydratase.